A 96-amino-acid polypeptide reads, in one-letter code: UPF0235 protein VP2619 (96 aa).

This sequence belongs to the UPF0235 family.

This is UPF0235 protein VP2619 from Vibrio parahaemolyticus serotype O3:K6 (strain RIMD 2210633).